Reading from the N-terminus, the 104-residue chain is Cysteine-rich and transmembrane domain-containing protein 1 (104 aa).

2 stretches are compositionally biased toward pro residues: residues 1 to 25 and 33 to 47; these read MNPENPPPYPGPGPTAPYPPYPQQP and GAPPPQGYPYPPPQG. Positions 1–47 are disordered; sequence MNPENPPPYPGPGPTAPYPPYPQQPMGPMGPMGAPPPQGYPYPPPQG. Residues 81 to 98 form a helical membrane-spanning segment; the sequence is LGPSTCLTACWTALCCCC.

This sequence belongs to the CYSTM1 family.

It is found in the membrane. The protein is Cysteine-rich and transmembrane domain-containing protein 1 (Cystm1) of Mus musculus (Mouse).